A 628-amino-acid chain; its full sequence is DNA mismatch repair protein MutL (628 aa).

The tract at residues 334-367 is disordered; the sequence is SDFAQPSADNMPKPESPGAPAAHGRKDDAPAAHA. Positions 357 to 367 are enriched in basic and acidic residues; the sequence is GRKDDAPAAHA.

Belongs to the DNA mismatch repair MutL/HexB family.

Its function is as follows. This protein is involved in the repair of mismatches in DNA. It is required for dam-dependent methyl-directed DNA mismatch repair. May act as a 'molecular matchmaker', a protein that promotes the formation of a stable complex between two or more DNA-binding proteins in an ATP-dependent manner without itself being part of a final effector complex. This chain is DNA mismatch repair protein MutL, found in Opitutus terrae (strain DSM 11246 / JCM 15787 / PB90-1).